The following is a 160-amino-acid chain: Transcription elongation factor GreA (160 aa).

Residues 1–72 (MAEKTYPMTQ…QIQILETKIR (72 aa)) are a coiled coil.

Belongs to the GreA/GreB family.

Its function is as follows. Necessary for efficient RNA polymerase transcription elongation past template-encoded arresting sites. The arresting sites in DNA have the property of trapping a certain fraction of elongating RNA polymerases that pass through, resulting in locked ternary complexes. Cleavage of the nascent transcript by cleavage factors such as GreA or GreB allows the resumption of elongation from the new 3'terminus. GreA releases sequences of 2 to 3 nucleotides. This chain is Transcription elongation factor GreA, found in Streptococcus agalactiae serotype Ia (strain ATCC 27591 / A909 / CDC SS700).